The chain runs to 131 residues: Transcriptional activator protein (131 aa).

A Nuclear localization signal motif is present at residues 13–28; that stretch reads KAQHRIAKKRAVRRRR. The segment at 33 to 52 is a zinc-finger region; that stretch reads CGCSIYIHINCAKDGNGFTH. The disordered stretch occupies residues 78–131; the sequence is DVQXGGSTLHAHKDIPHTNPVQPQPEESTKSSQSVPELPSLDGIDSSFWDDIFE. The interval 117–131 is transactivation; that stretch reads SLDGIDSSFWDDIFE.

It belongs to the geminiviridae transcriptional activator protein family. Monomer. Homodimer. Homooligomer. Self-interaction correlates with nuclear localization and efficient activation of transcription. Monomers suppress local silencing by interacting with and inactivating host adenosine kinase 2 (ADK2) in the cytoplasm. Interacts with and inhibits host SNF1 kinase. Binds to ssDNA. Post-translationally, phosphorylated.

It localises to the host nucleus. The protein resides in the host cytoplasm. Its function is as follows. Strong activator of the late viral genes promoters. Enhances the expression of the capsid protein and nuclear shuttle protein. Acts as a suppressor of RNA-mediated gene silencing, also known as post-transcriptional gene silencing (PTGS), a mechanism of plant viral defense that limits the accumulation of viral RNAs. Suppresses the host RNA silencing by inhibiting adenosine kinase 2 (ADK2), a kinase involved in a general methylation pathway. Also suppresses the host basal defense by interacting with and inhibiting SNF1 kinase, a key regulator of cell metabolism implicated in innate antiviral defense. Determines pathogenicity. This Cucurbita moschata (Winter crookneck squash) protein is Transcriptional activator protein.